The following is a 109-amino-acid chain: Protein reprimo (109 aa).

N-linked (GlcNAc...) asparagine glycosylation is found at Asn-7 and Asn-18. Residues 56-76 (VVQIAVMCVLSLTVVFGIFFL) traverse the membrane as a helical segment. Ser-98 is modified (phosphoserine).

Belongs to the reprimo family.

The protein localises to the cytoplasm. It localises to the membrane. May be involved in the regulation of p53-dependent G2 arrest of the cell cycle. Seems to induce cell cycle arrest by inhibiting CDK1 activity and nuclear translocation of the CDC2 cyclin B1 complex. In Bos taurus (Bovine), this protein is Protein reprimo (RPRM).